The following is a 313-amino-acid chain: Undecaprenyl-diphosphatase (313 aa).

A run of 6 helical transmembrane segments spans residues 121–141 (YRIGWYVIIATIPIGVLGFLF), 152–172 (LWLVSFMLIAFALVIAAAEHY), 187–207 (GLVMGFAQCLALIPGVSRSGA), 225–245 (FSFLLAIPAVTASGLFSLPDA), 259–279 (QLLVATIVSFVVGYASVAWLL), and 290–310 (FVGYRIVLGLVIMGLLGAGVI).

The protein belongs to the UppP family.

The protein resides in the cell membrane. The catalysed reaction is di-trans,octa-cis-undecaprenyl diphosphate + H2O = di-trans,octa-cis-undecaprenyl phosphate + phosphate + H(+). Its function is as follows. Catalyzes the dephosphorylation of undecaprenyl diphosphate (UPP). Confers resistance to bacitracin. The chain is Undecaprenyl-diphosphatase from Nocardia farcinica (strain IFM 10152).